Consider the following 62-residue polypeptide: Large ribosomal subunit protein uL30 (62 aa).

Belongs to the universal ribosomal protein uL30 family. Part of the 50S ribosomal subunit.

The sequence is that of Large ribosomal subunit protein uL30 from Shouchella clausii (strain KSM-K16) (Alkalihalobacillus clausii).